Consider the following 132-residue polypeptide: Replication enhancer protein (132 aa).

Belongs to the geminiviridae replication enhancer protein family. As to quaternary structure, homooligomer. Interacts with the replication-associated protein (REP). Interacts with host proliferating cell nuclear antigen (PCNA). Interacts with host retinoblastoma-related protein 1 (RBR1), and may thereby deregulate the host cell cycle. Oligomerization and interaction with PCNA are necessary for optimal replication enhancement.

Increases viral DNA accumulation. Enhances infectivity and symptom expression. This is Replication enhancer protein from Solanum lycopersicum (Tomato).